Reading from the N-terminus, the 682-residue chain is Zinc finger protein 16 (682 aa).

Composition is skewed to basic and acidic residues over residues 1–10 (MPSLRTRREE) and 113–125 (VSERDWGVPEGRR). Disordered regions lie at residues 1–33 (MPSLRTRREEAEMELSAPGPSPWTPAAQAHVSD) and 112–134 (DVSERDWGVPEGRRLPQSLSQEG). The necessary for transcription activation stretch occupies residues 62-210 (YQQPDCDTRT…GVPTAESPLI (149 aa)). The C2H2-type 1; degenerate zinc-finger motif lies at 209–231 (LICNECGKTFQGNPDLIQCQIVH). Residues 237 to 259 (FMCDDCGKTFSQNSVLKNHHRSH) form a C2H2-type 2; degenerate zinc finger. Lys253 participates in a covalent cross-link: Glycyl lysine isopeptide (Lys-Gly) (interchain with G-Cter in SUMO2). C2H2-type zinc fingers lie at residues 265-287 (YQCSECGKAFRGHSDFSRHQSHH), 293-315 (YMCNECGKAFSQNSSLKKHQKSH), 321-343 (YECNECGKAFRRSSNLIQHQRIH), 349-371 (YVCSECGKAFRRSSNLIKHHRTH), 377-399 (FECGECGKAFSQSAHLRKHQRVH), 405-427 (YECNDCGKPFSRVSNLIKHHRVH), 433-455 (YKCSDCGKAFSQSSSLIQHRRIH), and 461-483 (HVCNICGKAFSYSSVLRKHQIIH). 2 required for nuclear localization regions span residues 268-393 (SECG…AHLR) and 341-373 (RIHSGEKPYVCSECGKAFRRSSNLIKHHRTHTG). Residues 473–503 (SSVLRKHQIIHTGEKPYRCSVCGKAFSHSSA) are required for nuclear localization. Lys487 carries the N6-acetyllysine modification. 7 C2H2-type zinc fingers span residues 489 to 511 (YRCSVCGKAFSHSSALIQHQGVH), 517 to 539 (YACHECGKTFGRSSNLILHQRVH), 545 to 567 (YECTECGKTFSQSSTLIQHQRIH), 573 to 595 (HECNQCGKAFNRSSNLIHHQKVH), 601 to 623 (YTCVECGKGFSQSSHLIQHQIIH), 629 to 651 (YKCSECGKAFSQRSVLIQHQRIH), and 657 to 679 (YDCAACGKAFSQRSKLIKHQLIH).

This sequence belongs to the krueppel C2H2-type zinc-finger protein family. In terms of assembly, interacts with INCA1; the interaction inhibits INCA1 activity and induces the cell cycle process.

The protein resides in the nucleus. Functionally, acts as a transcriptional activator. Promotes cell proliferation by facilitating the cell cycle phase transition from the S to G2/M phase. Involved in both the hemin- and phorbol myristate acetate (PMA)-induced erythroid and megakaryocytic differentiation, respectively. Also plays a role as an inhibitor of cell apoptosis. The sequence is that of Zinc finger protein 16 (ZNF16) from Gorilla gorilla gorilla (Western lowland gorilla).